The primary structure comprises 233 residues: MYRVVTIEEVWDVAKDVKAFRFNENIEFAPGQFIMAWLPGVGEKPFSLAWEDMIVVKRVGPFTTKLFELKEGDRLWIRGPYGHGFIKRGEKVALVGGGIGIPPLYAFAKKNQGKFRQMTLIYGARSKDELSLLDIENYVDDAVITTDDGSAGRKGFPTEVLAERREEFDQVYACGPEPMLKAVLKVMNYKNVQISAERYMKCGIGVCGSCNLGKYLVCRDGPVFEGEKLVGLL.

One can recognise an FAD-binding FR-type domain in the interval 1–87 (MYRVVTIEEV…RGPYGHGFIK (87 aa)). C202, C207, C210, and C218 together coordinate [2Fe-2S] cluster.

It belongs to the PyrK family. In terms of assembly, heterotetramer of 2 PyrK and 2 PyrD type B subunits. [2Fe-2S] cluster is required as a cofactor. It depends on FAD as a cofactor.

It functions in the pathway pyrimidine metabolism; UMP biosynthesis via de novo pathway; orotate from (S)-dihydroorotate (NAD(+) route): step 1/1. Its function is as follows. Responsible for channeling the electrons from the oxidation of dihydroorotate from the FMN redox center in the PyrD type B subunit to the ultimate electron acceptor NAD(+). This is Probable dihydroorotate dehydrogenase B (NAD(+)), electron transfer subunit from Thermococcus kodakarensis (strain ATCC BAA-918 / JCM 12380 / KOD1) (Pyrococcus kodakaraensis (strain KOD1)).